The following is a 320-amino-acid chain: Ferrochelatase (320 aa).

His-194 and Glu-275 together coordinate Fe cation.

The protein belongs to the ferrochelatase family. As to quaternary structure, monomer.

It localises to the cytoplasm. The enzyme catalyses heme b + 2 H(+) = protoporphyrin IX + Fe(2+). It functions in the pathway porphyrin-containing compound metabolism; protoheme biosynthesis; protoheme from protoporphyrin-IX: step 1/1. In terms of biological role, catalyzes the ferrous insertion into protoporphyrin IX. This is Ferrochelatase from Shigella dysenteriae serotype 1 (strain Sd197).